The primary structure comprises 248 residues: TPR repeat-containing protein slr0751 (248 aa).

TPR repeat units follow at residues 61–94, 95–128, 129–162, and 163–196; these read PEAIFAQGVKAGEAGNYAEAVELFSVVLNLSPDS, PETHYNRGLAWERLGNVDQAIADYGRSIALDRYY, IPPYINRGNLYSQQQDHHTAIQDFTQAITYDPNR, and YKAYYNRANSYFQLGQYAQAIADYNRVLVLRPDY.

The polypeptide is TPR repeat-containing protein slr0751 (Synechocystis sp. (strain ATCC 27184 / PCC 6803 / Kazusa)).